Consider the following 400-residue polypeptide: Enoyl-[acyl-carrier-protein] reductase [NADH] 2 (400 aa).

NAD(+) is bound by residues 48 to 53 (GASSGF), 75 to 76 (FE), 112 to 113 (DA), and 141 to 142 (LA). Substrate is bound at residue Tyr-227. Tyr-237 functions as the Proton donor in the catalytic mechanism. Residues Lys-246 and 275–277 (LVT) contribute to the NAD(+) site.

This sequence belongs to the TER reductase family. As to quaternary structure, monomer.

The catalysed reaction is a 2,3-saturated acyl-[ACP] + NAD(+) = a (2E)-enoyl-[ACP] + NADH + H(+). It participates in lipid metabolism; fatty acid biosynthesis. Functionally, involved in the final reduction of the elongation cycle of fatty acid synthesis (FAS II). Catalyzes the reduction of a carbon-carbon double bond in an enoyl moiety that is covalently linked to an acyl carrier protein (ACP). This chain is Enoyl-[acyl-carrier-protein] reductase [NADH] 2, found in Photobacterium profundum (strain SS9).